Consider the following 977-residue polypeptide: Mineralocorticoid receptor (977 aa).

Residues 1–19 (METKGYHSRPEGLDMERRW) show a composition bias toward basic and acidic residues. Disordered regions lie at residues 1 to 37 (METK…AERT) and 231 to 288 (QGTP…VSSP). Residues 1–601 (METKGYHSRP…STGSSRPSKI (601 aa)) form a modulating region. Polar residues predominate over residues 231–243 (QGTPLTCSPTVDN). S250, S259, S283, S287, and S299 each carry phosphoserine. The span at 259-288 (SPLSSPLSSMKSPISSPPSHCSVKSPVSSP) shows a compositional bias: low complexity. Disordered regions lie at residues 305 to 327 (NSRC…SPAA) and 344 to 368 (SGAS…KGAH). Residues C602, C605, C619, C622, C638, C644, C654, and C657 each contribute to the Zn(2+) site. 2 NR C4-type zinc fingers span residues 602–622 (CLVC…CGSC) and 638–662 (CAGR…LQKC). A DNA-binding region (nuclear receptor) is located at residues 602–667 (CLVCGDGASG…RLQKCLQAGM (66 aa)). Residues 668-718 (NLGARKSKKLGKLKGLHEEQPQQPPPPQSPEEGTTYIAPAKEPSVNTALVP) form a hinge region. Positions 682 to 703 (GLHEEQPQQPPPPQSPEEGTTY) are disordered. The region spanning 719-957 (QLSSISRALT…EFPAMLVEII (239 aa)) is the NR LBD domain. 21-hydroxyprogesterone is bound by residues N763 and Q769. 2 residues coordinate aldosterone: N763 and Q769. N763 and Q769 together coordinate progesterone. The tract at residues 775 to 778 (KWAK) is important for coactivator binding. Positions 810 and 938 each coordinate 21-hydroxyprogesterone. Aldosterone-binding residues include R810 and T938. Positions 810 and 938 each coordinate progesterone.

It belongs to the nuclear hormone receptor family. NR3 subfamily.

The protein resides in the cytoplasm. It localises to the nucleus. Its function is as follows. Receptor for both mineralocorticoids (MC) such as aldosterone and glucocorticoids (GC) such as corticosterone or cortisol. Binds to mineralocorticoid response elements (MRE) and transactivates target genes. The effect of MC is to increase ion and water transport and thus raise extracellular fluid volume and blood pressure and lower potassium levels. This is Mineralocorticoid receptor (NR3C2) from Tupaia belangeri (Common tree shrew).